The sequence spans 87 residues: Translation initiation factor IF-1 (87 aa).

Residues 16-87 enclose the S1-like domain; it reads LSKEDVIEME…TKGRISYRHK (72 aa).

This sequence belongs to the IF-1 family. As to quaternary structure, component of the 30S ribosomal translation pre-initiation complex which assembles on the 30S ribosome in the order IF-2 and IF-3, IF-1 and N-formylmethionyl-tRNA(fMet); mRNA recruitment can occur at any time during PIC assembly.

The protein localises to the cytoplasm. One of the essential components for the initiation of protein synthesis. Stabilizes the binding of IF-2 and IF-3 on the 30S subunit to which N-formylmethionyl-tRNA(fMet) subsequently binds. Helps modulate mRNA selection, yielding the 30S pre-initiation complex (PIC). Upon addition of the 50S ribosomal subunit IF-1, IF-2 and IF-3 are released leaving the mature 70S translation initiation complex. This chain is Translation initiation factor IF-1, found in Magnetococcus marinus (strain ATCC BAA-1437 / JCM 17883 / MC-1).